Consider the following 423-residue polypeptide: tRNA(Ile)-lysidine synthase (423 aa).

27–32 (SGGVDS) contributes to the ATP binding site.

It belongs to the tRNA(Ile)-lysidine synthase family.

It is found in the cytoplasm. It catalyses the reaction cytidine(34) in tRNA(Ile2) + L-lysine + ATP = lysidine(34) in tRNA(Ile2) + AMP + diphosphate + H(+). Ligates lysine onto the cytidine present at position 34 of the AUA codon-specific tRNA(Ile) that contains the anticodon CAU, in an ATP-dependent manner. Cytidine is converted to lysidine, thus changing the amino acid specificity of the tRNA from methionine to isoleucine. In Streptococcus mutans serotype c (strain ATCC 700610 / UA159), this protein is tRNA(Ile)-lysidine synthase.